The sequence spans 184 residues: Tumor necrosis factor receptor superfamily member 13C (184 aa).

The Extracellular segment spans residues Met-1–Leu-78. The stretch at Pro-18–Cys-35 is one TNFR-Cys; truncated repeat. 2 disulfides stabilise this stretch: Cys-19/Cys-32 and Cys-24/Cys-35. Residues Asp-26–His-31 are essential for TNFSF13B/TALL1/BAFF/BLyS binding. Residues Pro-43–Ser-62 are disordered. Residues Phe-79–Val-99 form a helical; Signal-anchor for type III membrane protein membrane-spanning segment. The Cytoplasmic segment spans residues Ser-100–Gln-184. The tract at residues Arg-107–Gln-184 is disordered. Over residues Asp-118–Asp-128 the composition is skewed to basic and acidic residues. Residues Leu-168–Gln-184 are compositionally biased toward polar residues.

As to expression, highly expressed in spleen and lymph node, and in resting B-cells. Detected at lower levels in activated B-cells, resting CD4+ T-cells, in thymus and peripheral blood leukocytes.

It localises to the membrane. In terms of biological role, B-cell receptor specific for TNFSF13B/TALL1/BAFF/BLyS. Promotes the survival of mature B-cells and the B-cell response. The protein is Tumor necrosis factor receptor superfamily member 13C (TNFRSF13C) of Homo sapiens (Human).